We begin with the raw amino-acid sequence, 211 residues long: MRKYIKIGVAGPVGAGKTALIERLTREIACKYSVAVITNDIYTQEDAEFLTKNSLLPPERIMGVETGGCPHTAIREDASMNLEAVDEMVARFPEVELIFIESGGDNLSATFSPDLADVTIFVIDVAQGEKIPRKGGPGITRSDLLVINKTDLAPFVGADLSVMERDARRMRNGQPFIFTNLMKNENLDGVIGWIEKYALLKNIEDPASLVR.

11–18 (GPVGAGKT) is a binding site for GTP.

This sequence belongs to the SIMIBI class G3E GTPase family. UreG subfamily. Homodimer. UreD, UreF and UreG form a complex that acts as a GTP-hydrolysis-dependent molecular chaperone, activating the urease apoprotein by helping to assemble the nickel containing metallocenter of UreC. The UreE protein probably delivers the nickel.

It localises to the cytoplasm. Functionally, facilitates the functional incorporation of the urease nickel metallocenter. This process requires GTP hydrolysis, probably effectuated by UreG. This chain is Urease accessory protein UreG, found in Actinobacillus pleuropneumoniae serotype 3 (strain JL03).